The primary structure comprises 346 residues: Dihydroorotase (346 aa).

Positions 13 and 15 each coordinate Zn(2+). Substrate-binding positions include 15–17 and Asn41; that span reads HLR. 3 residues coordinate Zn(2+): Lys99, His136, and His174. An N6-carboxylysine modification is found at Lys99. A substrate-binding site is contributed by His136. Leu219 serves as a coordination point for substrate. Asp247 serves as a coordination point for Zn(2+). The active site involves Asp247. Substrate-binding residues include His251 and Ala263.

The protein belongs to the metallo-dependent hydrolases superfamily. DHOase family. Class II DHOase subfamily. Homodimer. The cofactor is Zn(2+).

The catalysed reaction is (S)-dihydroorotate + H2O = N-carbamoyl-L-aspartate + H(+). Its pathway is pyrimidine metabolism; UMP biosynthesis via de novo pathway; (S)-dihydroorotate from bicarbonate: step 3/3. In terms of biological role, catalyzes the reversible cyclization of carbamoyl aspartate to dihydroorotate. This Chelativorans sp. (strain BNC1) protein is Dihydroorotase.